A 619-amino-acid polypeptide reads, in one-letter code: Sorting nexin-41 (619 aa).

Residues 1-95 form a disordered region; it reads MWNDEDNNPY…ELVPRRKPGG (95 aa). One can recognise a PX domain in the interval 108 to 224; the sequence is PELPILITEA…WRFLDPNSSW (117 aa). Residues Arg142, Ser144, Lys168, and Arg191 each coordinate a 1,2-diacyl-sn-glycero-3-phospho-(1D-myo-inositol-3-phosphate). Residues 444–510 form a disordered region; sequence YLSSSQQIQP…GSPSHKKAAS (67 aa). Positions 454 to 467 are enriched in basic and acidic residues; it reads PRREPPAQHRRDGS.

Belongs to the sorting nexin family.

It is found in the endosome membrane. Its subcellular location is the endomembrane system. May be required for cytoplasm to vacuole transport (Cvt) and pexophagy. This chain is Sorting nexin-41 (vsp-6), found in Neurospora crassa (strain ATCC 24698 / 74-OR23-1A / CBS 708.71 / DSM 1257 / FGSC 987).